A 212-amino-acid polypeptide reads, in one-letter code: MTDEKVINKKLVGDNKLFRHQAKFVAGAMDIKQLPNFALPQIAFVGKSNVGKSSLINTICNNKKLAKVSNTPGRTRQINFFNLVDKLIIVDLPGYGFAQVPNQVKDQWEILINHYLRKSDNLKLVNLLIDSRRGIKENDKKVAELLLANKRDFQIIFTKSDKVTDRKNLNLEAQNFLATLNYSCNLIYVSSRSKEGARELKTSLAKCIKLEK.

Positions 38-210 (ALPQIAFVGK…KTSLAKCIKL (173 aa)) constitute an EngB-type G domain. Residues 46 to 53 (GKSNVGKS), 73 to 77 (GRTRQ), 91 to 94 (DLPG), 158 to 161 (TKSD), and 189 to 191 (VSS) each bind GTP. Positions 53 and 75 each coordinate Mg(2+).

This sequence belongs to the TRAFAC class TrmE-Era-EngA-EngB-Septin-like GTPase superfamily. EngB GTPase family. Mg(2+) is required as a cofactor.

Necessary for normal cell division and for the maintenance of normal septation. This Rickettsia bellii (strain OSU 85-389) protein is Probable GTP-binding protein EngB.